The sequence spans 103 residues: Integration host factor subunit beta (103 aa).

The disordered stretch occupies residues 62–81; that stretch reads RNPKTGESVALPGKHVPHFK.

The protein belongs to the bacterial histone-like protein family. As to quaternary structure, heterodimer of an alpha and a beta chain.

Functionally, this protein is one of the two subunits of integration host factor, a specific DNA-binding protein that functions in genetic recombination as well as in transcriptional and translational control. The sequence is that of Integration host factor subunit beta from Xanthomonas campestris pv. campestris (strain B100).